Reading from the N-terminus, the 388-residue chain is MNLHEYQAKQLFARYGLPAPTGYACTTPREAEEAASKIGSGPWVVKCQVHAGGRGKAGGVKVVSNKEDIRAFAENWLGKKLVTYQTDAQGQPVHQILVEAATDIDKELYLGAVVDRGTRRVVFMASTEGGVEIEKVAEETPELIHKAAIDPLVGPQPYQGRELAFKLGLSGKQVAQFTKIFMGLATLFLERDLALVEINPLVITKQGDLICLDGKLGADGNALFRQPELREMRDPSQEDSREAHAAQWELNYVALDGNIGCMVNGAGLAMGTMDIVKLHGGSPANFLDVGGGATKERVTEAFKIILSDDKVKAVFVNIFGGIVRCDLIADGIIGAVAEVGVSVPVVVRLEGNNAELGAKKLADSGLNIIAATSLTGAAQQVVAAAGDK.

The region spanning 9–244 is the ATP-grasp domain; the sequence is KQLFARYGLP…PSQEDSREAH (236 aa). Residues Lys-46, 53–55, Glu-99, Thr-102, and Glu-107 each bind ATP; that span reads GRG. Positions 199 and 213 each coordinate Mg(2+). Substrate is bound by residues Asn-264 and 321-323; that span reads GIV.

The protein belongs to the succinate/malate CoA ligase beta subunit family. As to quaternary structure, heterotetramer of two alpha and two beta subunits. The cofactor is Mg(2+).

The enzyme catalyses succinate + ATP + CoA = succinyl-CoA + ADP + phosphate. It catalyses the reaction GTP + succinate + CoA = succinyl-CoA + GDP + phosphate. It functions in the pathway carbohydrate metabolism; tricarboxylic acid cycle; succinate from succinyl-CoA (ligase route): step 1/1. Succinyl-CoA synthetase functions in the citric acid cycle (TCA), coupling the hydrolysis of succinyl-CoA to the synthesis of either ATP or GTP and thus represents the only step of substrate-level phosphorylation in the TCA. The beta subunit provides nucleotide specificity of the enzyme and binds the substrate succinate, while the binding sites for coenzyme A and phosphate are found in the alpha subunit. In Pectobacterium atrosepticum (strain SCRI 1043 / ATCC BAA-672) (Erwinia carotovora subsp. atroseptica), this protein is Succinate--CoA ligase [ADP-forming] subunit beta.